We begin with the raw amino-acid sequence, 360 residues long: DNA integrity scanning protein DisA (360 aa).

Residues Asp9–Ser147 enclose the DAC domain. ATP is bound by residues Gly76, Leu94, and Thr107–Thr111.

This sequence belongs to the DisA family. Homooctamer. Requires Mg(2+) as cofactor.

It carries out the reaction 2 ATP = 3',3'-c-di-AMP + 2 diphosphate. Participates in a DNA-damage check-point that is active prior to asymmetric division when DNA is damaged. DisA forms globular foci that rapidly scan along the chromosomes during sporulation, searching for lesions. When a lesion is present, DisA pauses at the lesion site. This triggers a cellular response that culminates in a temporary block in sporulation initiation. Its function is as follows. Also has diadenylate cyclase activity, catalyzing the condensation of 2 ATP molecules into cyclic di-AMP (c-di-AMP). c-di-AMP acts as a signaling molecule that couples DNA integrity with progression of sporulation. The rise in c-di-AMP level generated by DisA while scanning the chromosome, operates as a positive signal that advances sporulation; upon encountering a lesion, the DisA focus arrests at the damaged site and halts c-di-AMP synthesis. The protein is DNA integrity scanning protein DisA of Clostridium tetani (strain Massachusetts / E88).